The primary structure comprises 115 residues: NADH-ubiquinone oxidoreductase chain 3 (115 aa).

3 helical membrane-spanning segments follow: residues 4–24, 55–75, and 87–107; these read FIVL…AFWL, FFLV…LLPL, and TMLT…YEWL.

Belongs to the complex I subunit 3 family. As to quaternary structure, core subunit of respiratory chain NADH dehydrogenase (Complex I) which is composed of 45 different subunits. Interacts with TMEM186. Interacts with TMEM242.

Its subcellular location is the mitochondrion inner membrane. It catalyses the reaction a ubiquinone + NADH + 5 H(+)(in) = a ubiquinol + NAD(+) + 4 H(+)(out). Its function is as follows. Core subunit of the mitochondrial membrane respiratory chain NADH dehydrogenase (Complex I) which catalyzes electron transfer from NADH through the respiratory chain, using ubiquinone as an electron acceptor. Essential for the catalytic activity of complex I. The sequence is that of NADH-ubiquinone oxidoreductase chain 3 from Reithrodontomys megalotis (Western harvest mouse).